Reading from the N-terminus, the 203-residue chain is Peptidyl-tRNA hydrolase (203 aa).

Residue Y18 coordinates tRNA. The active-site Proton acceptor is the H23. TRNA contacts are provided by F69, N71, and N117.

Belongs to the PTH family. As to quaternary structure, monomer.

The protein localises to the cytoplasm. It carries out the reaction an N-acyl-L-alpha-aminoacyl-tRNA + H2O = an N-acyl-L-amino acid + a tRNA + H(+). Hydrolyzes ribosome-free peptidyl-tRNAs (with 1 or more amino acids incorporated), which drop off the ribosome during protein synthesis, or as a result of ribosome stalling. Its function is as follows. Catalyzes the release of premature peptidyl moieties from peptidyl-tRNA molecules trapped in stalled 50S ribosomal subunits, and thus maintains levels of free tRNAs and 50S ribosomes. In Prochlorococcus marinus subsp. pastoris (strain CCMP1986 / NIES-2087 / MED4), this protein is Peptidyl-tRNA hydrolase.